Consider the following 251-residue polypeptide: uncharacterized protein (251 aa).

Histidine 5, histidine 7, glutamate 101, histidine 132, histidine 163, and aspartate 209 together coordinate a divalent metal cation.

Belongs to the metallo-dependent hydrolases superfamily. TatD-type hydrolase family. The cofactor is a divalent metal cation.

This is an uncharacterized protein from Methanocaldococcus jannaschii (strain ATCC 43067 / DSM 2661 / JAL-1 / JCM 10045 / NBRC 100440) (Methanococcus jannaschii).